The primary structure comprises 121 residues: MSFYESVFIIRQDVSLNDIDKIVDDFAKIIKDNNGTIVKKEYWGLRTLAYKIGNNKKGHYYFLGLDITGNVKEELERKMKLNENIIRFLTIKADSISSEPSQILKNQSTENTPVIDVTINN.

Belongs to the bacterial ribosomal protein bS6 family.

Functionally, binds together with bS18 to 16S ribosomal RNA. This chain is Small ribosomal subunit protein bS6, found in Rickettsia felis (strain ATCC VR-1525 / URRWXCal2) (Rickettsia azadi).